A 479-amino-acid polypeptide reads, in one-letter code: Nuclear receptor subfamily 6 group A member 1 (479 aa).

The tract at residues 1–32 (MERDERPPSGGGGGGGSAGFLEPPAALPPPPR) is disordered. Residues 9 to 18 (SGGGGGGGSA) show a composition bias toward gly residues. The segment at residues 57 to 132 (QRTCLICGDR…MGMNRKAIRE (76 aa)) is a DNA-binding region (nuclear receptor). Residues Cys-60, Cys-63, Cys-77, Cys-80, Cys-96, Cys-102, Cys-112, and Cys-115 each contribute to the Zn(2+) site. 2 NR C4-type zinc fingers span residues 60 to 80 (CLICGDRATGLHYGIISCEGC) and 96 to 120 (CSRDKNCVMSRKQRNRCQYCRLLKC). 2 disordered regions span residues 131-150 (REDGMPGGRNKSIGPVQISE) and 162-198 (FEEEANHWSNHGDSDHSSPGNRASESNQPSPGSTLSS). Residues 165-177 (EANHWSNHGDSDH) are compositionally biased toward basic and acidic residues. The interval 172–252 (HGDSDHSSPG…RSLDPQSYSL (81 aa)) is sufficient for interaction with UIMC1. A compositionally biased stretch (polar residues) spans 178–198 (SSPGNRASESNQPSPGSTLSS). The NR LBD domain maps to 248-479 (QSYSLIHQLV…HSCKTSVGKE (232 aa)).

Belongs to the nuclear hormone receptor family. NR6 subfamily. As to quaternary structure, homodimer. Interacts with UIMC1.

The protein resides in the nucleus. Its function is as follows. Orphan nuclear receptor that binds to a response element containing the sequence 5'-TCAAGGTCA-3'. Acts as a regulator of embryonic stem cell pluripotency by mediating repression of POU5F1/OCT4: binds to the DR0 element within the POU5F1/OCT4 promoter and inhibits POU5F1/OCT4 expression during embryonic stem cell differentiation. Involved in the regulation of gene expression in germ cell development during gametogenesis. In Sus scrofa (Pig), this protein is Nuclear receptor subfamily 6 group A member 1 (NR6A1).